A 549-amino-acid polypeptide reads, in one-letter code: Cytochrome c oxidase subunit 1 homolog, bacteroid (549 aa).

3 helical membrane passes run 12–32 (IGES…VIAA), 39–59 (PFAF…FCIV), and 87–107 (FSSF…LIIA). H131 contributes to the heme b binding site. 8 helical membrane passes run 132-152 (TSAV…FYVV), 168-188 (FVVV…LLGV), 201-221 (ADLW…ATII), 228-248 (IFVA…LHLG), 279-299 (GHNA…YYFI), 312-332 (LSII…PHHL), 344-364 (LGMT…INGL), and 382-402 (MLVV…MMSI). Cu cation-binding residues include H280, H330, and H331. Positions 418 and 420 each coordinate heme b. Transmembrane regions (helical) follow at residues 423–443 (ALGW…PWAW), 458–478 (FWVA…SGIL), and 512–532 (AGGG…WMTV).

This sequence belongs to the heme-copper respiratory oxidase family. Requires Cu(2+) as cofactor. Heme b serves as cofactor.

Its subcellular location is the cell membrane. It carries out the reaction 4 Fe(II)-[cytochrome c] + O2 + 8 H(+)(in) = 4 Fe(III)-[cytochrome c] + 2 H2O + 4 H(+)(out). The protein operates within energy metabolism; oxidative phosphorylation. Functionally, cytochrome c oxidase is the component of the respiratory chain that catalyzes the reduction of oxygen to water. Subunits 1-3 form the functional core of the enzyme complex. Co I is the catalytic subunit of the enzyme. Electrons originating in cytochrome c or a quinol are transferred to the bimetallic center formed by a high-spin heme and copper B. This is Cytochrome c oxidase subunit 1 homolog, bacteroid (fixN) from Bradyrhizobium diazoefficiens (strain JCM 10833 / BCRC 13528 / IAM 13628 / NBRC 14792 / USDA 110).